A 489-amino-acid chain; its full sequence is Heme-based aerotactic transducer HemAT (489 aa).

A Methyl-accepting transducer domain is found at 218-454; the sequence is PLSSLEATSQ…EVAEMVDDVD (237 aa).

The protein belongs to the methyl-accepting chemotaxis (MCP) protein family. Homotetramer.

Its function is as follows. Heme-containing signal transducer responsible for aerotaxis, the migratory response toward or away from oxygen. The polypeptide is Heme-based aerotactic transducer HemAT (hemAT) (Halobacterium salinarum (strain ATCC 700922 / JCM 11081 / NRC-1) (Halobacterium halobium)).